The sequence spans 113 residues: Non-specific lipid-transfer protein 6 (113 aa).

The signal sequence occupies residues 1–19 (MRSLLLAVCLVLALHCGEA). Disulfide bonds link C23–C70, C33–C47, C48–C95, and C68–C109.

The protein belongs to the plant LTP family.

Functionally, plant non-specific lipid-transfer proteins transfer phospholipids as well as galactolipids across membranes. May play a role in wax or cutin deposition in the cell walls of expanding epidermal cells and certain secretory tissues. The protein is Non-specific lipid-transfer protein 6 (LTP6) of Arabidopsis thaliana (Mouse-ear cress).